The following is a 150-amino-acid chain: Transcription antitermination protein NusB (150 aa).

It belongs to the NusB family.

In terms of biological role, involved in transcription antitermination. Required for transcription of ribosomal RNA (rRNA) genes. Binds specifically to the boxA antiterminator sequence of the ribosomal RNA (rrn) operons. The chain is Transcription antitermination protein NusB from Saccharophagus degradans (strain 2-40 / ATCC 43961 / DSM 17024).